The following is a 173-amino-acid chain: MRNRAIKSFSICICQIFIIYFIFFLLLCVNRICSALSNGFNFLIIYGGTFFHSGKYSIPILDVDHQLNGNSSLGTVGLYFHVPFTPPDIIPPVPRSPNNMFLCFFSSIVFASAFVFSFIVNNVCKDFLFLSLNSGFSFTGYITGLYPLYRISRVSSLASKYCVVGTLGSDLKS.

The next 4 helical transmembrane spans lie at 9–29, 32–52, 100–120, and 127–147; these read FSIC…LLCV, ICSA…TFFH, MFLC…SFIV, and FLFL…GLYP.

It is found in the membrane. This is an uncharacterized protein from Saccharomyces cerevisiae (strain ATCC 204508 / S288c) (Baker's yeast).